The following is a 795-amino-acid chain: MKFSELWLREWVNPAIDSDALANQITMAGLEVDGVEPVAGSFHGVVVGEVVECAQHPNADKLRVTKVNVGGDRLLDIVCGAPNCRQGLRVAVATIGAVLPGDFKIKAAKLRGEPSEGMLCSFSELGISDDHNGIIELPADAPIGTDIREYLKLDDNTIEISVTPNRADCLGIIGVARDVAVLNQLPLVEPEIVPVGATIDDTLPITVEAPEACSRYLGRVVKGINVKAPTPLWMKEKLRRCGIRSIDAVVDVTNYVLLELGQPMHAFDKDRIEGGIVVRMAKEGETLVLLDGTEAKLNADTLVIADHNKALAMGGIFGGEHSGVNDETQNVLLECAFFSPLSITGRARRHGLHTDASHRYERGVDPALQHKAMERATCLLIDICGGEAGPVIDITNEATLPKRATITLRRSKLDRLIGHHIADEQVTDILRRLGCEVTEGKDEWQAVAPSWRFDMEIEEDLVEEVARVYGYNNIPDEPVQASLIMGTHREADLSLKRVKTLLNDKGYQEVITYSFVDPKVQQMIHPGVEALLLPSPISVEMSAMRLSLWTGLLATVVYNQNRQQNRVRIFESGLRFVPDTQAPLGIRQDLMLAGVICGNRYEEHWNLAKETVDFYDLKGDLESVLDLTGKLNEVEFRAEANPALHPGQSAAIYLKGERIGFVGVVHPELERKLDLNGRTLVFELEWNKLADRVVPQAREISRFPANRRDIAVVVAENVPAVDILSECKKVGVNQVVGVNLFDVYRGKGVAEGYKSLAISLILQDTSRTLEEEEIAATVAKCVEALKERFQASLRD.

In terms of domain architecture, tRNA-binding spans 39 to 148; the sequence is AGSFHGVVVG…ADAPIGTDIR (110 aa). In terms of domain architecture, B5 spans 401-476; that stretch reads PKRATITLRR…RVYGYNNIPD (76 aa). Residues aspartate 454, aspartate 460, glutamate 463, and glutamate 464 each coordinate Mg(2+). The FDX-ACB domain maps to 701 to 794; sequence SRFPANRRDI…LKERFQASLR (94 aa).

Belongs to the phenylalanyl-tRNA synthetase beta subunit family. Type 1 subfamily. Tetramer of two alpha and two beta subunits. It depends on Mg(2+) as a cofactor.

The protein resides in the cytoplasm. The enzyme catalyses tRNA(Phe) + L-phenylalanine + ATP = L-phenylalanyl-tRNA(Phe) + AMP + diphosphate + H(+). In Shigella dysenteriae serotype 1 (strain Sd197), this protein is Phenylalanine--tRNA ligase beta subunit.